The sequence spans 277 residues: Thymidylate synthase (277 aa).

Arg-21 lines the dUMP pocket. (6R)-5,10-methylene-5,6,7,8-tetrahydrofolate is bound at residue His-51. Residue 126–127 coordinates dUMP; the sequence is RR. Cys-159 acts as the Nucleophile in catalysis. Residues 179–182, Asn-190, and 220–222 each bind dUMP; these read RSSD and HAY. Asp-182 contributes to the (6R)-5,10-methylene-5,6,7,8-tetrahydrofolate binding site. Ala-276 contacts (6R)-5,10-methylene-5,6,7,8-tetrahydrofolate.

This sequence belongs to the thymidylate synthase family. Bacterial-type ThyA subfamily. As to quaternary structure, homodimer.

It is found in the cytoplasm. The enzyme catalyses dUMP + (6R)-5,10-methylene-5,6,7,8-tetrahydrofolate = 7,8-dihydrofolate + dTMP. The protein operates within pyrimidine metabolism; dTTP biosynthesis. In terms of biological role, catalyzes the reductive methylation of 2'-deoxyuridine-5'-monophosphate (dUMP) to 2'-deoxythymidine-5'-monophosphate (dTMP) while utilizing 5,10-methylenetetrahydrofolate (mTHF) as the methyl donor and reductant in the reaction, yielding dihydrofolate (DHF) as a by-product. This enzymatic reaction provides an intracellular de novo source of dTMP, an essential precursor for DNA biosynthesis. This chain is Thymidylate synthase, found in Pseudomonas fluorescens (strain SBW25).